The primary structure comprises 104 residues: uncharacterized protein (104 aa).

Belongs to the BolA/IbaG family.

This is an uncharacterized protein from Buchnera aphidicola subsp. Acyrthosiphon pisum (strain APS) (Acyrthosiphon pisum symbiotic bacterium).